The chain runs to 437 residues: Alpha-galactosidase 3 (437 aa).

Positions 1–30 (MVIMKKMKDSVLFLVVGLFSLSVLVSQSIA) are cleaved as a signal peptide. 2 disulfide bridges follow: C85–C117 and C165–C195. The N-linked (GlcNAc...) asparagine glycan is linked to N88. Substrate contacts are provided by residues 115–116 (DD) and K191. The Nucleophile role is filled by D193. N214 carries N-linked (GlcNAc...) asparagine glycosylation. Substrate-binding positions include 226-230 (EWGVD), R244, and D248. The active-site Proton donor is the D248. N-linked (GlcNAc...) asparagine glycans are attached at residues N250, N315, and N408.

It belongs to the glycosyl hydrolase 27 family. In terms of assembly, homodimer.

The protein localises to the secreted. Its subcellular location is the cell wall. The protein resides in the extracellular space. It localises to the apoplast. It is found in the vacuole. The enzyme catalyses Hydrolysis of terminal, non-reducing alpha-D-galactose residues in alpha-D-galactosides, including galactose oligosaccharides, galactomannans and galactolipids.. Its function is as follows. May regulate leaf (and possibly other organ) development by functioning in cell wall loosening and cell wall expansion. In Arabidopsis thaliana (Mouse-ear cress), this protein is Alpha-galactosidase 3.